Reading from the N-terminus, the 231-residue chain is Probable caffeoyl-CoA O-methyltransferase 2 (231 aa).

Residues T53, D75, 77–78 (GV), S83, D101, A130, D152, D154, and Y161 contribute to the S-adenosyl-L-methionine site. D152 is a binding site for a divalent metal cation. D178 and N179 together coordinate a divalent metal cation.

This sequence belongs to the class I-like SAM-binding methyltransferase superfamily. Cation-dependent O-methyltransferase family. CCoAMT subfamily.

The enzyme catalyses (E)-caffeoyl-CoA + S-adenosyl-L-methionine = (E)-feruloyl-CoA + S-adenosyl-L-homocysteine + H(+). This is Probable caffeoyl-CoA O-methyltransferase 2 (omt6) from Dictyostelium discoideum (Social amoeba).